We begin with the raw amino-acid sequence, 863 residues long: Paramyosin (863 aa).

The segment at 1-18 (MSESHVKISRTIIRGTSP) is nonhelical region. The stretch at 19–836 (STVRLESRVR…ERTITIKRTI (818 aa)) forms a coiled coil. Residues 837 to 863 (GGPGSRAVSVVREINSVSRGNRATSIM) form a nonhelical region region.

Belongs to the paramyosin family. In terms of assembly, homodimer.

The protein resides in the cytoplasm. It localises to the myofibril. In terms of biological role, paramyosin is a major structural component of many thick filaments isolated from invertebrate muscles. This Taenia saginata (Beef tapeworm) protein is Paramyosin (PMY).